We begin with the raw amino-acid sequence, 248 residues long: Pyridoxine 5'-phosphate synthase (248 aa).

Asn10 lines the 3-amino-2-oxopropyl phosphate pocket. 1-deoxy-D-xylulose 5-phosphate is bound at residue 12–13 (DH). Arg21 is a 3-amino-2-oxopropyl phosphate binding site. The active-site Proton acceptor is His46. 1-deoxy-D-xylulose 5-phosphate is bound by residues Arg48 and His53. The Proton acceptor role is filled by Glu73. Position 103 (Thr103) interacts with 1-deoxy-D-xylulose 5-phosphate. His194 acts as the Proton donor in catalysis. Residues Gly195 and 216–217 (GH) contribute to the 3-amino-2-oxopropyl phosphate site.

This sequence belongs to the PNP synthase family. Homooctamer; tetramer of dimers.

It is found in the cytoplasm. The enzyme catalyses 3-amino-2-oxopropyl phosphate + 1-deoxy-D-xylulose 5-phosphate = pyridoxine 5'-phosphate + phosphate + 2 H2O + H(+). It participates in cofactor biosynthesis; pyridoxine 5'-phosphate biosynthesis; pyridoxine 5'-phosphate from D-erythrose 4-phosphate: step 5/5. Its function is as follows. Catalyzes the complicated ring closure reaction between the two acyclic compounds 1-deoxy-D-xylulose-5-phosphate (DXP) and 3-amino-2-oxopropyl phosphate (1-amino-acetone-3-phosphate or AAP) to form pyridoxine 5'-phosphate (PNP) and inorganic phosphate. The polypeptide is Pyridoxine 5'-phosphate synthase (Legionella pneumophila (strain Corby)).